We begin with the raw amino-acid sequence, 321 residues long: Glucokinase (321 aa).

An ATP-binding site is contributed by 8–13 (GDVGGT).

The protein belongs to the bacterial glucokinase family.

The protein resides in the cytoplasm. It carries out the reaction D-glucose + ATP = D-glucose 6-phosphate + ADP + H(+). The protein is Glucokinase of Pectobacterium atrosepticum (strain SCRI 1043 / ATCC BAA-672) (Erwinia carotovora subsp. atroseptica).